The primary structure comprises 211 residues: Ribosomal RNA small subunit methyltransferase G (211 aa).

S-adenosyl-L-methionine is bound by residues Gly-73, 126–127, and Arg-142; that span reads IE.

It belongs to the methyltransferase superfamily. RNA methyltransferase RsmG family.

It localises to the cytoplasm. It catalyses the reaction guanosine(527) in 16S rRNA + S-adenosyl-L-methionine = N(7)-methylguanosine(527) in 16S rRNA + S-adenosyl-L-homocysteine. Functionally, specifically methylates the N7 position of guanine in position 527 of 16S rRNA. In Methylorubrum populi (strain ATCC BAA-705 / NCIMB 13946 / BJ001) (Methylobacterium populi), this protein is Ribosomal RNA small subunit methyltransferase G.